Reading from the N-terminus, the 512-residue chain is GMP synthase [glutamine-hydrolyzing] (512 aa).

A Glutamine amidotransferase type-1 domain is found at 7–197 (TILILDFGGQ…LFEVCDCSAD (191 aa)). The active-site Nucleophile is cysteine 84. Catalysis depends on residues histidine 171 and glutamate 173. Positions 198–387 (WTMDSLIEQT…LGIPDEILYR (190 aa)) constitute a GMPS ATP-PPase domain. 225–231 (SGGVDSA) serves as a coordination point for ATP.

In terms of assembly, homodimer.

It carries out the reaction XMP + L-glutamine + ATP + H2O = GMP + L-glutamate + AMP + diphosphate + 2 H(+). It participates in purine metabolism; GMP biosynthesis; GMP from XMP (L-Gln route): step 1/1. Catalyzes the synthesis of GMP from XMP. The protein is GMP synthase [glutamine-hydrolyzing] of Caldanaerobacter subterraneus subsp. tengcongensis (strain DSM 15242 / JCM 11007 / NBRC 100824 / MB4) (Thermoanaerobacter tengcongensis).